A 239-amino-acid chain; its full sequence is Uridylate kinase (239 aa).

Residue 12 to 15 (KLSG) participates in ATP binding. The segment at 21 to 26 (GEQGFG) is involved in allosteric activation by GTP. Gly55 is a binding site for UMP. ATP is bound by residues Gly56 and Arg60. UMP contacts are provided by residues Asp75 and 136-143 (TGNPYFST). ATP is bound by residues Thr163, Tyr169, and Asp172.

This sequence belongs to the UMP kinase family. As to quaternary structure, homohexamer.

The protein localises to the cytoplasm. It catalyses the reaction UMP + ATP = UDP + ADP. The protein operates within pyrimidine metabolism; CTP biosynthesis via de novo pathway; UDP from UMP (UMPK route): step 1/1. With respect to regulation, allosterically activated by GTP. Inhibited by UTP. In terms of biological role, catalyzes the reversible phosphorylation of UMP to UDP. This is Uridylate kinase from Koribacter versatilis (strain Ellin345).